We begin with the raw amino-acid sequence, 185 residues long: MAAQKDQQKDAEGEGLSATTLLPKLIPSGAGREWLERRRATIRPWGTFVDQQRFSRPRNVGELCQRLVRNVEYYQSNYVFVFLGLILYCVVTSPMLLVALAVFFGACYILYLRTLQSKLVLFGREVSPAHQYALAGGVSFPFFWLAGAGSAVFWVLGATLVLIGSHAAFHQMEPADGEELQMEPV.

Over 1–78 (MAAQKDQQKD…RNVEYYQSNY (78 aa)) the chain is Cytoplasmic. The required for interaction with prenylated RAB3A and VAMP2 stretch occupies residues 30-54 (AGREWLERRRATIRPWGTFVDQQRF). A run of 2 helical transmembrane segments spans residues 79–94 (VFVF…VTSP) and 95–112 (MLLV…ILYL). At 113–131 (RTLQSKLVLFGREVSPAHQ) the chain is on the cytoplasmic side. 2 helical membrane passes run 132 to 148 (YALA…LAGA) and 149 to 165 (GSAV…LIGS). A required for interaction with GDI1 region spans residues 165–185 (SHAAFHQMEPADGEELQMEPV). At 166–185 (HAAFHQMEPADGEELQMEPV) the chain is on the cytoplasmic side. The segment at 175-185 (ADGEELQMEPV) is required for interaction with prenylated RAB3A and VAMP2. A homodimerization region spans residues 175–185 (ADGEELQMEPV).

The protein belongs to the PRA1 family. Homodimer. Interacts with VAMP2 (synaptobrevin-2), GDI1, NRDG1 and PCLO. Interacts with prenylated Rab proteins (including RAB5 and RAB6), and with the members of the Ras superfamily HRAS, RHOA, TC21, and RAP1A.

It localises to the cell membrane. It is found in the cytoplasm. The protein resides in the golgi apparatus. Its subcellular location is the cytoplasmic vesicle. The protein localises to the secretory vesicle. It localises to the synaptic vesicle. General Rab protein regulator required for vesicle formation from the Golgi complex. May control vesicle docking and fusion by mediating the action of Rab GTPases to the SNARE complexes. In addition it inhibits the removal of Rab GTPases from the membrane by GDI1. The chain is Prenylated Rab acceptor protein 1 (Rabac1) from Mus musculus (Mouse).